Here is a 430-residue protein sequence, read N- to C-terminus: Adenylosuccinate synthetase (430 aa).

GTP-binding positions include 12-18 (GDEGKGK) and 40-42 (GHT). Residue aspartate 13 is the Proton acceptor of the active site. Aspartate 13 and glycine 40 together coordinate Mg(2+). Residues 13-16 (DEGK), 38-41 (NAGH), threonine 128, arginine 142, glutamine 223, threonine 238, and arginine 302 contribute to the IMP site. Histidine 41 functions as the Proton donor in the catalytic mechanism. A substrate-binding site is contributed by 298–304 (TTTGRPR). Residues arginine 304, 330–332 (SID), and 412–414 (SVG) contribute to the GTP site.

This sequence belongs to the adenylosuccinate synthetase family. In terms of assembly, homodimer. The cofactor is Mg(2+).

It is found in the cytoplasm. The catalysed reaction is IMP + L-aspartate + GTP = N(6)-(1,2-dicarboxyethyl)-AMP + GDP + phosphate + 2 H(+). The protein operates within purine metabolism; AMP biosynthesis via de novo pathway; AMP from IMP: step 1/2. Functionally, plays an important role in the de novo pathway of purine nucleotide biosynthesis. Catalyzes the first committed step in the biosynthesis of AMP from IMP. In Streptococcus agalactiae serotype III (strain NEM316), this protein is Adenylosuccinate synthetase.